The chain runs to 35 residues: Conotoxin M11.2 (35 aa).

4 disulfide bridges follow: Cys2-Cys16, Cys9-Cys21, Cys15-Cys26, and Cys20-Cys33.

The protein belongs to the conotoxin I1 superfamily. In terms of tissue distribution, expressed by the venom duct.

The protein resides in the secreted. The sequence is that of Conotoxin M11.2 from Conus magus (Magical cone).